The following is an 85-amino-acid chain: Probable oxaloacetate decarboxylase gamma chain (85 aa).

Residues 15 to 35 (ISGMGFVLLFLIVLIYAISFI) traverse the membrane as a helical segment.

It belongs to the OadG family. In terms of assembly, heterotrimer of an alpha, a beta and a gamma subunit. Requires Na(+) as cofactor.

Its subcellular location is the cell membrane. The catalysed reaction is oxaloacetate + 2 Na(+)(in) + H(+) = pyruvate + 2 Na(+)(out) + CO2. In terms of biological role, catalyzes the decarboxylation of oxaloacetate coupled to Na(+) translocation. The sequence is that of Probable oxaloacetate decarboxylase gamma chain from Actinobacillus pleuropneumoniae serotype 5b (strain L20).